A 355-amino-acid chain; its full sequence is Uroporphyrinogen decarboxylase (355 aa).

Residues 36-40 (RQAGR), Asp85, Tyr160, Ser215, and His334 contribute to the substrate site.

Belongs to the uroporphyrinogen decarboxylase family. Homodimer.

Its subcellular location is the cytoplasm. The enzyme catalyses uroporphyrinogen III + 4 H(+) = coproporphyrinogen III + 4 CO2. It participates in porphyrin-containing compound metabolism; protoporphyrin-IX biosynthesis; coproporphyrinogen-III from 5-aminolevulinate: step 4/4. Its function is as follows. Catalyzes the decarboxylation of four acetate groups of uroporphyrinogen-III to yield coproporphyrinogen-III. The sequence is that of Uroporphyrinogen decarboxylase from Rhodococcus opacus (strain B4).